We begin with the raw amino-acid sequence, 389 residues long: MVQKRNHFLPYSLPLIGKEEIQEVTETLESGWLSKGPKVQQFEKEFAAFVGAKHAVAVNSCTAALFLALKAKGIGPGDEVITSPLTFSSTANTIIHTGATPVFADIDENTLNIDPVKLEAAVTPRTKAVVPVHFGGQSCDMDAILAVAQNHGLFVLEDAAHAVYTTYKQRMIGSIGDATAFSFYATKNLATGEGGMLTTDDEELADKIRVLSLHGMSKAAWNRYSSNGSWYYEVESPGYKMNMFDLQAALGLHQLKRLDDMQKRREEIAGRYQTAFQQIPGLITPFVHDDGRHAWHLYVLQVDEKKAGVTRSEMITALKDEYNIGTSVHFIPVHIHPYYQKQFGYKEADFPNAMNYYKRTLSLPLYPSMSDDDVDDVIEAVRDIVKGAD.

An N6-(pyridoxal phosphate)lysine modification is found at K187.

Belongs to the DegT/DnrJ/EryC1 family. It depends on pyridoxal 5'-phosphate as a cofactor.

Its pathway is spore coat biogenesis; spore coat polysaccharide biosynthesis. In Bacillus subtilis (strain 168), this protein is Spore coat polysaccharide biosynthesis protein SpsC (spsC).